The chain runs to 822 residues: Protein smoothened (822 aa).

The signal sequence occupies residues 1–28; it reads MSSKRPCSIVGSFWMLWIWTATSMVARA. Topologically, residues 29–212 are extracellular; sequence VILHPNETIF…EDEHSDMHSY (184 aa). The N-linked (GlcNAc...) asparagine glycan is linked to asparagine 34. 5 disulfide bridges follow: cysteine 42–cysteine 157, cysteine 48–cysteine 112, cysteine 56–cysteine 105, cysteine 96–cysteine 132, and cysteine 125–cysteine 147. One can recognise an FZ domain in the interval 43–160; sequence KKSTTCEVLK…EQFPKGCQNE (118 aa). Residue aspartate 73 coordinates cholesterol. A glycan (N-linked (GlcNAc...) asparagine) is linked at asparagine 167. 3 disulfides stabilise this stretch: cysteine 172-cysteine 192, cysteine 196-cysteine 274, and cysteine 293-cysteine 369. Residues 213 to 233 traverse the membrane as a helical segment; it reads IAVFGTITLLCTFFTLATFLA. Topologically, residues 234-241 are cytoplasmic; the sequence is DWKNSNRY. A helical transmembrane segment spans residues 242–262; the sequence is PAVILFYVNACFFIGSIGWLA. The Extracellular portion of the chain corresponds to 263–293; that stretch reads QFMDGARNEIVCKSDNTMRLGEPSSTETLSC. A helical membrane pass occupies residues 294-314; sequence VIIFVIVYYSLMSGVIWFVML. Residues 315-335 lie on the Cytoplasmic side of the membrane; the sequence is TYAWHTSFKALGTTHQPLSGK. Residues 336–356 form a helical membrane-spanning segment; sequence TSYFHLVTWSIPFILTVAILA. Residues 357–381 are Extracellular-facing; the sequence is NSQVDADSVSGICFVGYRYYEYRAG. Tyrosine 373 is a binding site for cholesterol. Residues 382-402 form a helical membrane-spanning segment; sequence FVLAPIGFVLVIGGYFLIRGV. The Cytoplasmic portion of the chain corresponds to 403-430; it reads MTLFSIKSNHPGLLSEKAASKINETMLR. The helical transmembrane segment at 431-451 threads the bilayer; it reads LGIFGFLAFGFVLITFGCHFY. The Extracellular portion of the chain corresponds to 452-503; it reads DFFNQAEWERSFREYVLCEANVTIAHQTNKPIPECAIKNRPSLLVGKINLFS. Cysteine 469 and cysteine 486 are oxidised to a cystine. An N-linked (GlcNAc...) asparagine glycan is attached at asparagine 472. The helical transmembrane segment at 504 to 524 threads the bilayer; the sequence is MFGTGIAMSTWVWTKATILIW. The Cytoplasmic segment spans residues 525–822; sequence KRTWFRIIGR…AELLDADSDF (298 aa). Residues 645 to 687 are disordered; sequence MMKRKKKKKKRRKEVRPAGPAADEGNPAYHRREFGPSAVPRLP. Over residues 647–658 the composition is skewed to basic residues; the sequence is KRKKKKKKRRKE.

This sequence belongs to the G-protein coupled receptor Fz/Smo family. As to quaternary structure, monomer.

The protein resides in the cell membrane. It is found in the cell projection. The protein localises to the cilium. In terms of biological role, g protein-coupled receptor which associates with the patched protein (ptch) to transduce Hedgehog protein signaling. Binding of sonic hedgehog (shh) to its receptor patched prevents inhibition of smoothened (smo) by patched. When active, smo binds to and sequesters protein kinase A catalytic subunit prkaca at the cell membrane, preventing prkaca-mediated phosphorylation of gli transcription factors which releases the gli proteins from prkaca-mediated inhibition and allows for transcriptional activation of Hedgehog signaling pathway target genes. Required for the development of primary and secondary motoneurons but not for the specification of midbrain dopaminergic neurons or development of the medial floor plate. Required for induction of lateral floor plate and posterior motoneurons, anterior neural plate patterning, dorsoventral forebrain patterning, dorsoventral retinal patterning, optic stalk development, and formation of the forebrain primary axonal scaffold. Required to regulate the formation of a subset of cerebellar neurons by limiting wnt1 expression which controls cerebellar expression of transcription factor olig2. Required for development of the pancreas. Required for muscle development. Required for the formation of a single continuous intestinal lumen from multiple discontinuous lumens, probably by regulating remodeling through rab11a-mediated trafficking to facilitate lumen fusion. Required for development of the adenohypophysis. Required for anteroposterior patterning of the otic vesicle. Required for development of the anterior craniofacial skeleton. Required for patterning of the caudal fin. Required during gastrulation and early somitogenesis stages to promote cardiomyocyte formation by regulating the specification of myocardial progenitors. Required for induction of arterial endothelial cell formation by repressing venous cell fate. This chain is Protein smoothened, found in Danio rerio (Zebrafish).